A 304-amino-acid polypeptide reads, in one-letter code: Small ribosomal subunit protein uS3 (304 aa).

Residues 17–86 (MDEYFAKQLS…NPQIDAQEVK (70 aa)) form the KH type-2 domain.

The protein belongs to the universal ribosomal protein uS3 family. In terms of assembly, part of the 30S ribosomal subunit.

Its function is as follows. Binds the lower part of the 30S subunit head. The chain is Small ribosomal subunit protein uS3 from Methanococcoides burtonii (strain DSM 6242 / NBRC 107633 / OCM 468 / ACE-M).